Consider the following 39-residue polypeptide: Cecropin-D-like peptide (39 aa).

As to expression, hemolymph.

Its subcellular location is the secreted. Its function is as follows. Cecropins have lytic and antibacterial activity against several Gram-positive and Gram-negative bacteria. Has antibacterial activity against the Gram-positive bacteria M.luteus (MIC=34.4 uM), L.monocytogenes (MIC=34.4 uM), and S.lutea (MIC=34.4 uM), and the Gram-negative bacterium E.coli D31 (MIC=8.6 uM). Lacks antibacterial activity against the Gram-positive bacterium B.circulans, and the Gram-negative bacteria E.coli ATCC 25922 and S.typhimurium. Has antifungal activity against A.niger, but lacks antifungal activity against C.albicans, C.wickerhamii, F.oxysporum, P.pastoris, P.tannophilus, S.cerevisiae, T.harzianum, and Z.marxianus. The chain is Cecropin-D-like peptide from Galleria mellonella (Greater wax moth).